The following is a 123-amino-acid chain: Thioredoxin domain-containing protein 17 (123 aa).

Residues 41 to 123 form the Thioredoxin domain; that stretch reads SWCPDCVKAE…DLVRMMFTED (83 aa). Active-site nucleophile residues include cysteine 43 and cysteine 46. Cysteine 43 and cysteine 46 are disulfide-bonded.

This sequence belongs to the thioredoxin family.

The protein localises to the cytoplasm. Functionally, disulfide reductase. May participate in various redox reactions through the reversible oxidation of its active center dithiol to a disulfide and catalyze dithiol-disulfide exchange reactions. Has peroxidase activity and may contribute to the elimination of cellular hydrogen peroxide. The sequence is that of Thioredoxin domain-containing protein 17 (txndc17) from Danio rerio (Zebrafish).